The primary structure comprises 108 residues: Nucleoid-associated protein GK0018 (108 aa).

Residues 1-32 (MMRGGMGNMQKMLKQMQKMQKEMQKAQEELAE) are disordered. The span at 9–18 (MQKMLKQMQK) shows a compositional bias: low complexity. A compositionally biased stretch (basic and acidic residues) spans 19–32 (MQKEMQKAQEELAE).

This sequence belongs to the YbaB/EbfC family. As to quaternary structure, homodimer.

It is found in the cytoplasm. The protein localises to the nucleoid. In terms of biological role, binds to DNA and alters its conformation. May be involved in regulation of gene expression, nucleoid organization and DNA protection. This is Nucleoid-associated protein GK0018 from Geobacillus kaustophilus (strain HTA426).